Reading from the N-terminus, the 358-residue chain is G-protein coupled receptor 62 (358 aa).

The Extracellular portion of the chain corresponds to 1 to 17 (MANGSGLSVTELAGSVG). Residue Asn3 is glycosylated (N-linked (GlcNAc...) asparagine). A helical transmembrane segment spans residues 18-38 (FILAVLVEVGAVLGNGTLLVV). Residues 39–53 (VLRTPDLQDAFYLAH) lie on the Cytoplasmic side of the membrane. A helical transmembrane segment spans residues 54–74 (LCVVDLLAAASIMPLGLLAAP). The Extracellular segment spans residues 75-89 (PGLGTVPLDPSSCRA). Residues 90–110 (ARFLSAALLPACTLGVAALGL) form a helical membrane-spanning segment. Residues 111–128 (ARYRLIVHPLRPGARPAP) are Cytoplasmic-facing. A helical transmembrane segment spans residues 129-149 (ALVLTAVWSAAALLGALSLLG). Topologically, residues 150 to 176 (PPPAPPPAPARCSVLAGGLGPFRPLWA) are extracellular. Residues 177–197 (MLAFALPALLLLAAYGSIFLV) form a helical membrane-spanning segment. Residues 198–234 (ARRAALRPPRGTRPRSDSLDSRLSFLPPLRPRLLGGK) are Cytoplasmic-facing. The chain crosses the membrane as a helical span at residues 235-255 (AALAPALAVGQFAACWLPYGC). Over 256 to 268 (ACLAPAARAAAAE) the chain is Extracellular. A helical membrane pass occupies residues 269–289 (ATVTWVAYSAFAAHPFLYGLL). The Cytoplasmic portion of the chain corresponds to 290–358 (QRPVRLALGR…RQTPSVSEAT (69 aa)). Positions 334-358 (VLGPSEAPEQARELARQTPSVSEAT) are disordered.

It belongs to the G-protein coupled receptor 1 family. As to quaternary structure, homodimer. Forms heterodimer with MTNR1B. Interacts with ARRB1 and ARRB2 in a spontaneous and agonist-independent manner; leading to the internalization of GPR62 in the endosomal compartment. In terms of tissue distribution, expressed in the brain and testes. Expressed widely, in the brain, including the cerebral cortex, cerebellum, hippocampus,thalamus and pituitary gland. In the testes, expressed specifically in the germ cells.

The protein localises to the cell membrane. It localises to the endosome membrane. Functionally, orphan G-protein coupled receptor. Constitutively activates the G(q/11)/inositol phosphate and the G(s)-alpha/cAMP signaling pathways. Has spontaneous activity for beta-arrestin recruitment. Shows a reciprocal regulatory interaction with the melatonin receptor MTNR1B most likely through receptor heteromerization. The protein is G-protein coupled receptor 62 (Gpr62) of Mus musculus (Mouse).